Here is a 183-residue protein sequence, read N- to C-terminus: Intermembrane phospholipid transport system binding protein MlaD (183 aa).

Topologically, residues 1–7 (MQTKKNE) are cytoplasmic. A helical; Signal-anchor for type II membrane protein membrane pass occupies residues 8 to 28 (IWVGIFLLAALLAALFVCLKA). Residues 29 to 183 (ANVTSIRTEP…ETTEPVGTTK (155 aa)) are Periplasmic-facing. The interval 39–116 (TYTLYATFDN…LGEQYLALNV (78 aa)) is MCE/MlaD. The disordered stretch occupies residues 155 to 183 (KGDDNKNSGDAPAAAPGNNETTEPVGTTK). Polar residues predominate over residues 172–183 (NNETTEPVGTTK).

This sequence belongs to the MlaD family. The complex is composed of two ATP-binding proteins (MlaF), two transmembrane proteins (MlaE), two cytoplasmic solute-binding proteins (MlaB) and six periplasmic solute-binding proteins (MlaD).

The protein localises to the cell inner membrane. In terms of biological role, part of the ABC transporter complex MlaFEDB, which is involved in a phospholipid transport pathway that maintains lipid asymmetry in the outer membrane by retrograde trafficking of phospholipids from the outer membrane to the inner membrane. MlaD functions in substrate binding with strong affinity for phospholipids and modulates ATP hydrolytic activity of the complex. The sequence is that of Intermembrane phospholipid transport system binding protein MlaD from Escherichia coli O157:H7.